Reading from the N-terminus, the 292-residue chain is NAD kinase (292 aa).

Asp73 acts as the Proton acceptor in catalysis. Residues 73 to 74 (DG), 147 to 148 (NE), His158, Arg175, Asp177, 188 to 193 (TAYSLS), and Gln247 each bind NAD(+).

Belongs to the NAD kinase family. A divalent metal cation is required as a cofactor.

It is found in the cytoplasm. The catalysed reaction is NAD(+) + ATP = ADP + NADP(+) + H(+). Involved in the regulation of the intracellular balance of NAD and NADP, and is a key enzyme in the biosynthesis of NADP. Catalyzes specifically the phosphorylation on 2'-hydroxyl of the adenosine moiety of NAD to yield NADP. The chain is NAD kinase from Shigella dysenteriae serotype 1 (strain Sd197).